The primary structure comprises 571 residues: Proline--tRNA ligase (571 aa).

Belongs to the class-II aminoacyl-tRNA synthetase family. ProS type 1 subfamily. As to quaternary structure, homodimer.

It is found in the cytoplasm. The catalysed reaction is tRNA(Pro) + L-proline + ATP = L-prolyl-tRNA(Pro) + AMP + diphosphate. Catalyzes the attachment of proline to tRNA(Pro) in a two-step reaction: proline is first activated by ATP to form Pro-AMP and then transferred to the acceptor end of tRNA(Pro). As ProRS can inadvertently accommodate and process non-cognate amino acids such as alanine and cysteine, to avoid such errors it has two additional distinct editing activities against alanine. One activity is designated as 'pretransfer' editing and involves the tRNA(Pro)-independent hydrolysis of activated Ala-AMP. The other activity is designated 'posttransfer' editing and involves deacylation of mischarged Ala-tRNA(Pro). The misacylated Cys-tRNA(Pro) is not edited by ProRS. The polypeptide is Proline--tRNA ligase (Acinetobacter baumannii (strain ATCC 17978 / DSM 105126 / CIP 53.77 / LMG 1025 / NCDC KC755 / 5377)).